Reading from the N-terminus, the 219-residue chain is Dynein light chain Tctex-type 4 (219 aa).

The segment at 1–84 (MAGRPVPAGR…RRPSLGPVPP (84 aa)) is disordered. The span at 10-20 (RQEEELAKDPG) shows a compositional bias: basic and acidic residues. Ser64 is subject to Phosphoserine.

It belongs to the dynein light chain Tctex-type family. Interacts with ENG/endoglin, TGFBR2 and TGFBR3. Interacts with PPP1CC.

It is found in the cell projection. The protein localises to the cilium. It localises to the flagellum. The protein resides in the cytoplasmic vesicle. Its subcellular location is the secretory vesicle. It is found in the acrosome. The protein localises to the cytoplasm. It localises to the cytoskeleton. The protein resides in the cilium axoneme. Its subcellular location is the nucleus. It is found in the microtubule organizing center. The polypeptide is Dynein light chain Tctex-type 4 (DYNLT4) (Sus scrofa (Pig)).